Reading from the N-terminus, the 433-residue chain is Enolase (433 aa).

Gln167 contacts (2R)-2-phosphoglycerate. The active-site Proton donor is Glu209. Mg(2+) contacts are provided by Asp246, Glu291, and Asp318. The (2R)-2-phosphoglycerate site is built by Lys343, Arg372, Ser373, and Lys394. Lys343 (proton acceptor) is an active-site residue.

It belongs to the enolase family. In terms of assembly, component of the RNA degradosome, a multiprotein complex involved in RNA processing and mRNA degradation. Mg(2+) serves as cofactor.

Its subcellular location is the cytoplasm. The protein resides in the secreted. The protein localises to the cell surface. It carries out the reaction (2R)-2-phosphoglycerate = phosphoenolpyruvate + H2O. It participates in carbohydrate degradation; glycolysis; pyruvate from D-glyceraldehyde 3-phosphate: step 4/5. Its function is as follows. Catalyzes the reversible conversion of 2-phosphoglycerate (2-PG) into phosphoenolpyruvate (PEP). It is essential for the degradation of carbohydrates via glycolysis. This is Enolase from Photorhabdus laumondii subsp. laumondii (strain DSM 15139 / CIP 105565 / TT01) (Photorhabdus luminescens subsp. laumondii).